We begin with the raw amino-acid sequence, 355 residues long: Adenine deaminase (355 aa).

3 residues coordinate Zn(2+): histidine 24, histidine 26, and histidine 204. Glutamate 207 functions as the Proton donor in the catalytic mechanism. Aspartate 285 is a Zn(2+) binding site. Aspartate 286 contacts substrate.

The protein belongs to the metallo-dependent hydrolases superfamily. Adenosine and AMP deaminases family. Adenine deaminase type 2 subfamily. Zn(2+) is required as a cofactor.

The catalysed reaction is adenine + H2O + H(+) = hypoxanthine + NH4(+). Functionally, catalyzes the hydrolytic deamination of adenine to hypoxanthine. Plays an important role in the purine salvage pathway and in nitrogen catabolism. The protein is Adenine deaminase of Geotalea uraniireducens (strain Rf4) (Geobacter uraniireducens).